We begin with the raw amino-acid sequence, 431 residues long: Tyrosine--tRNA ligase (431 aa).

L-tyrosine is bound at residue tyrosine 34. The 'HIGH' region signature appears at 39 to 48 (PTADSLHIGH). Tyrosine 171 and glutamine 175 together coordinate L-tyrosine. Positions 231–235 (KFGKT) match the 'KMSKS' region motif. Lysine 234 contacts ATP. Residues 353-422 (INVVEALVKT…GKYTILRRGK (70 aa)) form the S4 RNA-binding domain.

Belongs to the class-I aminoacyl-tRNA synthetase family. TyrS type 1 subfamily. As to quaternary structure, homodimer.

It localises to the cytoplasm. The catalysed reaction is tRNA(Tyr) + L-tyrosine + ATP = L-tyrosyl-tRNA(Tyr) + AMP + diphosphate + H(+). Catalyzes the attachment of tyrosine to tRNA(Tyr) in a two-step reaction: tyrosine is first activated by ATP to form Tyr-AMP and then transferred to the acceptor end of tRNA(Tyr). This Neisseria meningitidis serogroup A / serotype 4A (strain DSM 15465 / Z2491) protein is Tyrosine--tRNA ligase.